A 710-amino-acid chain; its full sequence is Chaperonin-containing T-complex member BBS12 (710 aa).

The protein belongs to the TCP-1 chaperonin family. BBS12 subfamily. Component of the chaperonin-containing T-complex (TRiC), a heterooligomeric complex of about 850 to 900 kDa that forms two stacked rings, 12 to 16 nm in diameter. Interacts with MKKS.

It localises to the cell projection. It is found in the cilium. Component of the chaperonin-containing T-complex (TRiC), a molecular chaperone complex that assists the folding of proteins upon ATP hydrolysis. As part of the TRiC complex may play a role in the assembly of BBSome, a complex involved in ciliogenesis regulating transports vesicles to the cilia. Involved in adipogenic differentiation. This is Chaperonin-containing T-complex member BBS12 (BBS12) from Homo sapiens (Human).